Here is a 161-residue protein sequence, read N- to C-terminus: Peptidyl-prolyl cis-trans isomerase 10 (161 aa).

Positions 1–153 constitute a PPIase cyclophilin-type domain; the sequence is MSVTLHTTSG…VQQKIQNVTI (153 aa).

It belongs to the cyclophilin-type PPIase family. PPIL3 subfamily.

It catalyses the reaction [protein]-peptidylproline (omega=180) = [protein]-peptidylproline (omega=0). In terms of biological role, PPIases accelerate the folding of proteins. It catalyzes the cis-trans isomerization of proline imidic peptide bonds in oligopeptides. The polypeptide is Peptidyl-prolyl cis-trans isomerase 10 (cyn-10) (Caenorhabditis elegans).